A 258-amino-acid chain; its full sequence is Protease HtpX homolog (258 aa).

2 helical membrane passes run 24 to 44 (VLLF…LGLG) and 45 to 65 (GPLF…LISP). His146 is a binding site for Zn(2+). Glu147 is a catalytic residue. Residue His150 coordinates Zn(2+). The next 2 membrane-spanning stretches (helical) occupy residues 157–177 (IVMT…WSTV) and 186–206 (LVGI…LFIS). Glu210 contributes to the Zn(2+) binding site.

This sequence belongs to the peptidase M48B family. Requires Zn(2+) as cofactor.

Its subcellular location is the cell membrane. The sequence is that of Protease HtpX homolog from Methanothermobacter thermautotrophicus (strain ATCC 29096 / DSM 1053 / JCM 10044 / NBRC 100330 / Delta H) (Methanobacterium thermoautotrophicum).